Reading from the N-terminus, the 320-residue chain is tRNA dimethylallyltransferase (320 aa).

Residue 5-12 (GPTAVGKS) participates in ATP binding. Position 7 to 12 (7 to 12 (TAVGKS)) interacts with substrate. The tract at residues 30-33 (DSMQ) is interaction with substrate tRNA.

Belongs to the IPP transferase family. Monomer. The cofactor is Mg(2+).

The enzyme catalyses adenosine(37) in tRNA + dimethylallyl diphosphate = N(6)-dimethylallyladenosine(37) in tRNA + diphosphate. Catalyzes the transfer of a dimethylallyl group onto the adenine at position 37 in tRNAs that read codons beginning with uridine, leading to the formation of N6-(dimethylallyl)adenosine (i(6)A). This is tRNA dimethylallyltransferase from Heliobacterium modesticaldum (strain ATCC 51547 / Ice1).